A 67-amino-acid chain; its full sequence is Potassium channel toxin alpha-KTx (67 aa).

Positions 1–25 are cleaved as a signal peptide; the sequence is MKNIAMKTTVVLTILLLSVLTAINA. The propeptide occupies 26-31; it reads DTMKKR. 4 disulfide bridges follow: Cys-35–Cys-54, Cys-40–Cys-59, Cys-44–Cys-61, and Cys-49–Cys-64.

It belongs to the short scorpion toxin superfamily. Potassium channel inhibitor family. As to expression, expressed by the venom gland.

Its subcellular location is the secreted. In terms of biological role, blocks Kv1.1/KCNA1, Kv1.2/KCNA2 and Kv1.3/KCNA3 voltage-gated potassium channels. The sequence is that of Potassium channel toxin alpha-KTx from Hoffmannihadrurus gertschi (Scorpion).